Consider the following 250-residue polypeptide: tRNA (guanine-N(1)-)-methyltransferase (250 aa).

S-adenosyl-L-methionine-binding positions include glycine 116 and 136–141; that span reads IGDYVL.

It belongs to the RNA methyltransferase TrmD family. In terms of assembly, homodimer.

The protein localises to the cytoplasm. It catalyses the reaction guanosine(37) in tRNA + S-adenosyl-L-methionine = N(1)-methylguanosine(37) in tRNA + S-adenosyl-L-homocysteine + H(+). In terms of biological role, specifically methylates guanosine-37 in various tRNAs. In Pseudomonas entomophila (strain L48), this protein is tRNA (guanine-N(1)-)-methyltransferase.